Consider the following 548-residue polypeptide: Isocitrate dehydrogenase [NAD(+)] 1, mitochondrial (548 aa).

A mitochondrion-targeting transit peptide spans M1–A53. Residues T132–T134 and N153 contribute to the NAD(+) site. D-threo-isocitrate-binding positions include S151–R157, R187, Y194, K266, D311, and D335. Mg(2+)-binding residues include D311, D335, and D339. Residues H372–D377 and N391 each bind NAD(+). In terms of domain architecture, EF-hand spans I499 to A534. Residues D512, N514, D516, F518, and E523 each contribute to the Ca(2+) site.

It belongs to the isocitrate and isopropylmalate dehydrogenases family. As to quaternary structure, homodimer. The cofactor is Mg(2+). Mn(2+) serves as cofactor.

The protein localises to the mitochondrion. The catalysed reaction is D-threo-isocitrate + NAD(+) = 2-oxoglutarate + CO2 + NADH. Its activity is regulated as follows. The homodimer exhibits allosteric regulation by isocitrate. Activated by Mn(2+) and Mg(2+). No activation by Na(+), K(+) or Li(+). Inhibited by Co(2+), Cu(2+) and Ni(2+), but not with Ca(2+) in the presence of Mn(2+) or Mg(2+). Competitively inhibited by NADH, but no effect on activity by 1.0 mM citrate. Strongly inhibited by excess ATP, ADP, AMP and alpha-ketoglutarate. Performs an essential role in the oxidative function of the tricarboxylic acid cycle and respiration. Catalyzes the decarboxylation of isocitrate to produce 2-oxoglutarate and generate NADH to provide electrons for energy production. No activity with NADP(+). In Phaeodactylum tricornutum (strain CCAP 1055/1), this protein is Isocitrate dehydrogenase [NAD(+)] 1, mitochondrial.